The sequence spans 931 residues: Phosphoenolpyruvate carboxylase (931 aa).

Residues H158 and K593 contribute to the active site.

It belongs to the PEPCase type 1 family. The cofactor is Mg(2+).

It catalyses the reaction oxaloacetate + phosphate = phosphoenolpyruvate + hydrogencarbonate. Forms oxaloacetate, a four-carbon dicarboxylic acid source for the tricarboxylic acid cycle. The chain is Phosphoenolpyruvate carboxylase from Azorhizobium caulinodans (strain ATCC 43989 / DSM 5975 / JCM 20966 / LMG 6465 / NBRC 14845 / NCIMB 13405 / ORS 571).